The primary structure comprises 626 residues: Chaperone protein HtpG (626 aa).

The tract at residues M1–R339 is a; substrate-binding. The b stretch occupies residues E340–K555. The c stretch occupies residues L556–G626.

The protein belongs to the heat shock protein 90 family. As to quaternary structure, homodimer.

The protein resides in the cytoplasm. Molecular chaperone. Has ATPase activity. This chain is Chaperone protein HtpG, found in Aggregatibacter actinomycetemcomitans (Actinobacillus actinomycetemcomitans).